Reading from the N-terminus, the 626-residue chain is MADQRMDISSTISDFMSPGATDLLSSPLGTSGMDCNRKRKGSSTDYQESMDTDKDDPHGRLEYTEHQGRIKNAREAHSQIEKRRRDKMNSFIDELASLVPTCNAMSRKLDKLTVLRMAVQHMKTLRGATNPYTEANYKPTFLSDDELKHLILRAADGFLFVVGCDRGKILFVSESVFKILNYSQNDLIGQSLFDYLHPKDIAKVKEQLSSSDTAPRERLIDAKTGLPVKTDITPGPSRLCSGARRSFFCRMKCNRPSVKVEDKDFPSTCSKKKADRKSFCTIHSTGYLKSWPPTKMGLDEDNEPDNEGCNLSCLVAIGRLHSHVVPQPVNGEIRVKSMEYVSRHAIDGKFVFVDQRATAILAYLPQELLGTSCYEYFHQDDIGHLAECHRQVLQTREKITTNCYKFKIKDGSFITLRSRWFSFMNPWTKEVEYIVSTNTVVLANVLEGGDPTFPQLTASPHSMDSMLPSGEGGPKRTHPTVPGIPGGTRAGAGKIGRMIAEEVMEIHRIRGSSPSSCGSSPLNITSTPPPDASSPGGKKILNGGTPDIPSSGLPPGQAQENPGYPYSDSSSILGENPHIGIDMIDNDQGSSSPSNDEAAMAVIMSLLEADAGLGGPVDFSDLPWPL.

Residues 1-60 (MADQRMDISSTISDFMSPGATDLLSSPLGTSGMDCNRKRKGSSTDYQESMDTDKDDPHGR) form a disordered region. Phosphoserine; by GSK3-beta is present on Ser-17. Position 21 is a phosphothreonine; by GSK3-beta (Thr-21). Residues 36-41 (NRKRKG) carry the Nuclear localization signal motif. Residues 51-60 (DTDKDDPHGR) show a composition bias toward basic and acidic residues. A bHLH domain is found at 72-125 (NAREAHSQIEKRRRDKMNSFIDELASLVPTCNAMSRKLDKLTVLRMAVQHMKTL). Phosphoserine is present on Ser-78. Ser-90 is modified (phosphoserine; by CK2). Residues 142–152 (LSDDELKHLIL) carry the Nuclear export signal 1 motif. Residues 143 to 215 (SDDELKHLIL…EQLSSSDTAP (73 aa)) enclose the PAS 1 domain. Residue Lys-252 forms a Glycyl lysine isopeptide (Lys-Gly) (interchain with G-Cter in SUMO2 and SUMO3) linkage. Lys-259 participates in a covalent cross-link: Glycyl lysine isopeptide (Lys-Gly) (interchain with G-Cter in SUMO); alternate. Lys-259 participates in a covalent cross-link: Glycyl lysine isopeptide (Lys-Gly) (interchain with G-Cter in SUMO2); alternate. Residues 326–396 (PQPVNGEIRV…ECHRQVLQTR (71 aa)) form the PAS 2 domain. The Nuclear export signal 2 signature appears at 361 to 369 (LAYLPQELL). Residues 401–444 (TNCYKFKIKDGSFITLRSRWFSFMNPWTKEVEYIVSTNTVVLAN) enclose the PAC domain. 2 disordered regions span residues 457 to 493 (TASP…AGAG) and 510 to 597 (RGSS…SNDE). A compositionally biased stretch (gly residues) spans 484 to 493 (IPGGTRAGAG). Residues 508–588 (RIRGSSPSSC…IGIDMIDNDQ (81 aa)) are interaction with CIART. A compositionally biased stretch (low complexity) spans 511 to 521 (GSSPSSCGSSP). An N6-acetyllysine modification is found at Lys-538.

As to quaternary structure, component of the circadian clock oscillator which includes the CRY1/2 proteins, CLOCK or NPAS2, BMAL1 or BMAL2, CSNK1D and/or CSNK1E, TIMELESS and the PER1/2/3 proteins. Forms a heterodimer with CLOCK. The CLOCK-BMAL1 heterodimer is required for E-box-dependent transactivation, for CLOCK nuclear translocation and degradation, and, for phosphorylation of both CLOCK and BMAL1. Part of a nuclear complex which also includes RACK1 and PRKCA; RACK1 and PRKCA are recruited to the complex in a circadian manner. Interacts with NPAS2. Interacts with EZH2. Interacts with SUMO3. Interacts with SIRT1. Interacts with AHR. Interacts with ID1, ID2 and ID3. Interacts with DDX4. Interacts with OGT. Interacts with EED and SUZ12. Interacts with MTA1. Interacts with CIART. Interacts with HSP90. Interacts with KAT2B and EP300. Interacts with BHLHE40/DEC1 and BHLHE41/DEC2. Interacts with RELB and the interaction is enhanced in the presence of CLOCK. Interacts with PER1, PER2, CRY1 and CRY2 and this interaction requires a translocation to the nucleus. Interaction of the CLOCK-BMAL1 heterodimer with PER or CRY inhibits transcription activation. Interaction of the CLOCK-BMAL1 with CRY1 is independent of DNA but with PER2 is off DNA. The CLOCK-BMAL1 heterodimer interacts with GSK3B. Interacts with KDM5A. Interacts with KMT2A; in a circadian manner. Interacts with UBE3A. Interacts with PRKCG. Interacts with MAGEL2. Interacts with NCOA2. Interacts with THRAP3. The CLOCK-BMAL1 heterodimer interacts with PASD1. Interacts with PASD1. Interacts with USP9X. Interacts with PIWIL2 (via PIWI domain). Interacts with HDAC3. Interacts with HNF4A. In terms of processing, ubiquitinated, leading to its proteasomal degradation. Deubiquitinated by USP9X. O-glycosylated; contains O-GlcNAc. O-glycosylation by OGT prevents protein degradation by inhibiting ubiquitination. It also stabilizes the CLOCK-BMAL1 heterodimer thereby increasing CLOCK-BMAL1-mediated transcription of genes in the negative loop of the circadian clock such as PER1/2/3 and CRY1/2. Post-translationally, acetylated on Lys-538 by CLOCK during the repression phase of the circadian cycle. Acetylation facilitates recruitment of CRY1 protein and initiates the repression phase of the circadian cycle. Acetylated at Lys-538 by KAT5 during the activation phase of the cycle, leading to recruitment of the positive transcription elongation factor b (P-TEFb) and BRD4, followed by productive elongation of circadian transcripts. Deacetylated by SIRT1, which may result in decreased protein stability. In terms of processing, phosphorylated upon dimerization with CLOCK. Phosphorylation enhances the transcriptional activity, alters the subcellular localization and decreases the stability of the CLOCK-BMAL1 heterodimer by promoting its degradation. Phosphorylation shows circadian variations in the liver with a peak between CT10 to CT14. Phosphorylation at Ser-90 by CK2 is essential for its nuclear localization, its interaction with CLOCK and controls CLOCK nuclear entry. Dephosphorylation at Ser-78 is important for dimerization with CLOCK and transcriptional activity. Sumoylated on Lys-259 upon dimerization with CLOCK. Predominantly conjugated to poly-SUMO2/3 rather than SUMO1 and the level of these conjugates undergo rhythmic variation, peaking at CT9-CT12. Sumoylation localizes it exclusively to the PML body and promotes its ubiquitination in the PML body, ubiquitin-dependent proteasomal degradation and the transcriptional activity of the CLOCK-BMAL1 heterodimer. Post-translationally, undergoes lysosome-mediated degradation in a time-dependent manner in the liver.

The protein resides in the nucleus. It is found in the cytoplasm. Its subcellular location is the PML body. Functionally, transcriptional activator which forms a core component of the circadian clock. The circadian clock, an internal time-keeping system, regulates various physiological processes through the generation of approximately 24 hour circadian rhythms in gene expression, which are translated into rhythms in metabolism and behavior. It is derived from the Latin roots 'circa' (about) and 'diem' (day) and acts as an important regulator of a wide array of physiological functions including metabolism, sleep, body temperature, blood pressure, endocrine, immune, cardiovascular, and renal function. Consists of two major components: the central clock, residing in the suprachiasmatic nucleus (SCN) of the brain, and the peripheral clocks that are present in nearly every tissue and organ system. Both the central and peripheral clocks can be reset by environmental cues, also known as Zeitgebers (German for 'timegivers'). The predominant Zeitgeber for the central clock is light, which is sensed by retina and signals directly to the SCN. The central clock entrains the peripheral clocks through neuronal and hormonal signals, body temperature and feeding-related cues, aligning all clocks with the external light/dark cycle. Circadian rhythms allow an organism to achieve temporal homeostasis with its environment at the molecular level by regulating gene expression to create a peak of protein expression once every 24 hours to control when a particular physiological process is most active with respect to the solar day. Transcription and translation of core clock components (CLOCK, NPAS2, BMAL1, BMAL2, PER1, PER2, PER3, CRY1 and CRY2) plays a critical role in rhythm generation, whereas delays imposed by post-translational modifications (PTMs) are important for determining the period (tau) of the rhythms (tau refers to the period of a rhythm and is the length, in time, of one complete cycle). A diurnal rhythm is synchronized with the day/night cycle, while the ultradian and infradian rhythms have a period shorter and longer than 24 hours, respectively. Disruptions in the circadian rhythms contribute to the pathology of cardiovascular diseases, cancer, metabolic syndromes and aging. A transcription/translation feedback loop (TTFL) forms the core of the molecular circadian clock mechanism. Transcription factors, CLOCK or NPAS2 and BMAL1 or BMAL2, form the positive limb of the feedback loop, act in the form of a heterodimer and activate the transcription of core clock genes and clock-controlled genes (involved in key metabolic processes), harboring E-box elements (5'-CACGTG-3') within their promoters. The core clock genes: PER1/2/3 and CRY1/2 which are transcriptional repressors form the negative limb of the feedback loop and interact with the CLOCK|NPAS2-BMAL1|BMAL2 heterodimer inhibiting its activity and thereby negatively regulating their own expression. This heterodimer also activates nuclear receptors NR1D1, NR1D2, RORA, RORB and RORG, which form a second feedback loop and which activate and repress BMAL1 transcription, respectively. BMAL1 positively regulates myogenesis and negatively regulates adipogenesis via the transcriptional control of the genes of the canonical Wnt signaling pathway. Plays a role in normal pancreatic beta-cell function; regulates glucose-stimulated insulin secretion via the regulation of antioxidant genes NFE2L2/NRF2 and its targets SESN2, PRDX3, CCLC and CCLM. Negatively regulates the mTORC1 signaling pathway; regulates the expression of MTOR and DEPTOR. Controls diurnal oscillations of Ly6C inflammatory monocytes; rhythmic recruitment of the PRC2 complex imparts diurnal variation to chemokine expression that is necessary to sustain Ly6C monocyte rhythms. Regulates the expression of HSD3B2, STAR, PTGS2, CYP11A1, CYP19A1 and LHCGR in the ovary and also the genes involved in hair growth. Plays an important role in adult hippocampal neurogenesis by regulating the timely entry of neural stem/progenitor cells (NSPCs) into the cell cycle and the number of cell divisions that take place prior to cell-cycle exit. Regulates the circadian expression of CIART. The CLOCK-BMAL1 heterodimer regulates the circadian expression of SERPINE1/PAI1, VWF, B3, CCRN4L/NOC, NAMPT, DBP, MYOD1, PPARGC1A, PPARGC1B, SIRT1, GYS2, F7, NGFR, GNRHR, BHLHE40/DEC1, ATF4, MTA1 and also genes implicated in glucose and lipid metabolism. Promotes rhythmic chromatin opening, regulating the DNA accessibility of other transcription factors. The NPAS2-BMAL1 heterodimer positively regulates the expression of MAOA, F7 and LDHA and modulates the circadian rhythm of daytime contrast sensitivity by regulating the rhythmic expression of adenylate cyclase type 1 (ADCY1) in the retina. The preferred binding motif for the CLOCK-BMAL1 heterodimer is 5'-CACGTGA-3', which contains a flanking adenine nucleotide at the 3-prime end of the canonical 6-nucleotide E-box sequence. CLOCK specifically binds to the half-site 5'-CAC-3', while BMAL1 binds to the half-site 5'-GTGA-3'. The CLOCK-BMAL1 heterodimer also recognizes the non-canonical E-box motifs 5'-AACGTGA-3' and 5'-CATGTGA-3'. Essential for the rhythmic interaction of CLOCK with ASS1 and plays a critical role in positively regulating CLOCK-mediated acetylation of ASS1. Plays a role in protecting against lethal sepsis by limiting the expression of immune checkpoint protein CD274 in macrophages in a PKM2-dependent manner. Regulates the diurnal rhythms of skeletal muscle metabolism via transcriptional activation of genes promoting triglyceride synthesis (DGAT2) and metabolic efficiency (COQ10B). The chain is Basic helix-loop-helix ARNT-like protein 1 (BMAL1) from Equus caballus (Horse).